The following is a 315-amino-acid chain: Cobalamin biosynthesis protein CobD (315 aa).

The next 5 helical transmembrane spans lie at 54–74 (GLLF…ILFL), 78–98 (IAYW…LAMT), 152–172 (ADGV…LALM), 203–223 (IANF…SFIL), and 295–315 (LLYT…LLLF).

This sequence belongs to the CobD/CbiB family.

The protein resides in the cell membrane. It participates in cofactor biosynthesis; adenosylcobalamin biosynthesis. Functionally, converts cobyric acid to cobinamide by the addition of aminopropanol on the F carboxylic group. This is Cobalamin biosynthesis protein CobD from Listeria monocytogenes serotype 4b (strain F2365).